The primary structure comprises 79 residues: Acyl carrier protein (79 aa).

The Carrier domain occupies 2 to 77 (ESIEQRVKKI…QAIDYINSHG (76 aa)). Ser37 is modified (O-(pantetheine 4'-phosphoryl)serine).

Belongs to the acyl carrier protein (ACP) family. Post-translationally, 4'-phosphopantetheine is transferred from CoA to a specific serine of apo-ACP by AcpS. This modification is essential for activity because fatty acids are bound in thioester linkage to the sulfhydryl of the prosthetic group.

The protein localises to the cytoplasm. It functions in the pathway lipid metabolism; fatty acid biosynthesis. Functionally, carrier of the growing fatty acid chain in fatty acid biosynthesis. This chain is Acyl carrier protein, found in Bordetella avium (strain 197N).